The primary structure comprises 572 residues: Dihydroxy-acid dehydratase (572 aa).

[2Fe-2S] cluster is bound at residue Cys-54. Asp-86 contacts Mg(2+). Cys-127 is a binding site for [2Fe-2S] cluster. The Mg(2+) site is built by Asp-128 and Lys-129. An N6-carboxylysine modification is found at Lys-129. Cys-199 lines the [2Fe-2S] cluster pocket. A Mg(2+)-binding site is contributed by Glu-449. The active-site Proton acceptor is Ser-475.

It belongs to the IlvD/Edd family. As to quaternary structure, homodimer. It depends on [2Fe-2S] cluster as a cofactor. Requires Mg(2+) as cofactor.

The enzyme catalyses (2R)-2,3-dihydroxy-3-methylbutanoate = 3-methyl-2-oxobutanoate + H2O. It carries out the reaction (2R,3R)-2,3-dihydroxy-3-methylpentanoate = (S)-3-methyl-2-oxopentanoate + H2O. It participates in amino-acid biosynthesis; L-isoleucine biosynthesis; L-isoleucine from 2-oxobutanoate: step 3/4. Its pathway is amino-acid biosynthesis; L-valine biosynthesis; L-valine from pyruvate: step 3/4. In terms of biological role, functions in the biosynthesis of branched-chain amino acids. Catalyzes the dehydration of (2R,3R)-2,3-dihydroxy-3-methylpentanoate (2,3-dihydroxy-3-methylvalerate) into 2-oxo-3-methylpentanoate (2-oxo-3-methylvalerate) and of (2R)-2,3-dihydroxy-3-methylbutanoate (2,3-dihydroxyisovalerate) into 2-oxo-3-methylbutanoate (2-oxoisovalerate), the penultimate precursor to L-isoleucine and L-valine, respectively. In Pelagibacter ubique (strain HTCC1062), this protein is Dihydroxy-acid dehydratase.